Here is a 396-residue protein sequence, read N- to C-terminus: Subtilisin-like protease 5 (396 aa).

The N-terminal stretch at 1 to 20 (MTGFLTILSLSLAALSVTNA) is a signal peptide. Positions 21 to 116 (AQILSVPQGA…VEPDAIIKQH (96 aa)) are excised as a propeptide. The 78-residue stretch at 37 to 114 (YIVVMKDDTS…AFVEPDAIIK (78 aa)) folds into the Inhibitor I9 domain. Residues 125–396 (PWGLSRLSNR…SRLLYNGSGR (272 aa)) enclose the Peptidase S8 domain. Active-site charge relay system residues include Asp-156 and His-187. Residues Asn-230 and Asn-248 are each glycosylated (N-linked (GlcNAc...) asparagine). Ser-342 functions as the Charge relay system in the catalytic mechanism. Residues 376 to 396 (PTIRNPGPDTTSRLLYNGSGR) are disordered. Asn-392 carries an N-linked (GlcNAc...) asparagine glycan.

Belongs to the peptidase S8 family.

It is found in the secreted. Functionally, secreted subtilisin-like serine protease with keratinolytic activity that contributes to pathogenicity. This Arthroderma gypseum (strain ATCC MYA-4604 / CBS 118893) (Microsporum gypseum) protein is Subtilisin-like protease 5 (SUB5).